The sequence spans 231 residues: Ribonuclease 3 (231 aa).

Positions 5-134 constitute an RNase III domain; that stretch reads QKKLKNDYGL…FLGALFIDQG (130 aa). Glu-47 serves as a coordination point for Mg(2+). Asp-51 is a catalytic residue. Residues Asn-120 and Glu-123 each contribute to the Mg(2+) site. Residue Glu-123 is part of the active site. The DRBM domain maps to 160-229; that stretch reads DYKTELQEVL…AENAIKGQNH (70 aa).

Belongs to the ribonuclease III family. In terms of assembly, homodimer. Mg(2+) is required as a cofactor.

The protein resides in the cytoplasm. The catalysed reaction is Endonucleolytic cleavage to 5'-phosphomonoester.. Digests double-stranded RNA. Involved in the processing of primary rRNA transcript to yield the immediate precursors to the large and small rRNAs (23S and 16S). Processes some mRNAs, and tRNAs when they are encoded in the rRNA operon. Processes pre-crRNA and tracrRNA of type II CRISPR loci if present in the organism. The polypeptide is Ribonuclease 3 (Lactococcus lactis subsp. lactis (strain IL1403) (Streptococcus lactis)).